The following is a 240-amino-acid chain: Uridylate kinase (240 aa).

Residue 13 to 16 participates in ATP binding; it reads KFSG. A UMP-binding site is contributed by G55. Residues G56 and R60 each contribute to the ATP site. UMP contacts are provided by residues D76 and 137–144; that span reads TGNPFFTT. 3 residues coordinate ATP: T164, Y170, and D173.

Belongs to the UMP kinase family. Homohexamer.

It is found in the cytoplasm. It catalyses the reaction UMP + ATP = UDP + ADP. Its pathway is pyrimidine metabolism; CTP biosynthesis via de novo pathway; UDP from UMP (UMPK route): step 1/1. With respect to regulation, inhibited by UTP. Functionally, catalyzes the reversible phosphorylation of UMP to UDP. This Helicobacter pylori (strain HPAG1) protein is Uridylate kinase.